A 1069-amino-acid polypeptide reads, in one-letter code: Cellulose synthase A catalytic subunit 5 [UDP-forming] (1069 aa).

Met1 carries the N-acetylmethionine modification. Topologically, residues 1–265 (MNTGGRLIAG…KSSKINPYRM (265 aa)) are cytoplasmic. Positions 39, 42, 58, 61, 66, 69, 81, and 84 each coordinate Zn(2+). Residues 39–85 (CQICGDEIELSVDGESFVACNECAFPVCRPCYEYERREGNQSCPQCK) form an RING-type; degenerate zinc finger. 2 positions are modified to phosphoserine: Ser229 and Ser230. Residues 266–286 (LIVLRLVILGLFFHYRILHPV) traverse the membrane as a helical segment. The Extracellular segment spans residues 287–288 (ND). The chain crosses the membrane as a helical span at residues 289-309 (AYALWLISVICEIWFAVSWVL). Topologically, residues 310 to 853 (DQFPKWYPIE…INSVVYPWTS (544 aa)) are cytoplasmic. Positions 348, 354, 355, and 384 each coordinate UDP-alpha-D-glucose. The active site involves Asp384. Residues 438–464 (VRERRAMKRDYEEFKVKINALVATAQK) are a coiled coil. Lys525 contributes to the UDP-alpha-D-glucose binding site. Positions 526 and 550 each coordinate Mn(2+). Asp770 is a catalytic residue. The helical transmembrane segment at 854-874 (IPLLVYCSLPAICLLTGKFIV) threads the bilayer. The Extracellular portion of the chain corresponds to 875–879 (PEISN). The chain crosses the membrane as a helical span at residues 880–900 (YASILFMALFGSIAVTGILEM). Residues 901–915 (QWGKVGIDDWWRNEQ) are Cytoplasmic-facing. A helical transmembrane segment spans residues 916–936 (FWVIGGVSAHLFALFQGLLKV). The Extracellular segment spans residues 937 to 965 (LAGVETNFTVTSKAADDGEFSELYIFKWT). Asn943 is a glycosylation site (N-linked (GlcNAc...) asparagine). A helical transmembrane segment spans residues 966-986 (SLLIPPTTLLIINVIGVIVGI). Residues 987–997 (SDAISNGYDSW) lie on the Cytoplasmic side of the membrane. A helical transmembrane segment spans residues 998 to 1018 (GPLFGRLFFAFWVILHLYPFL). The Extracellular segment spans residues 1019 to 1027 (KGLLGKQDR). Residues 1028–1048 (MPTIILVWSILLASILTLLWV) form a helical membrane-spanning segment. Residues 1049–1069 (RVNPFVAKGGPILEICGLDCL) lie on the Cytoplasmic side of the membrane.

The protein belongs to the glycosyltransferase 2 family. Plant cellulose synthase subfamily. Requires Zn(2+) as cofactor. Mn(2+) serves as cofactor. Expressed in young plants, stems and flowers.

The protein resides in the cell membrane. The catalysed reaction is [(1-&gt;4)-beta-D-glucosyl](n) + UDP-alpha-D-glucose = [(1-&gt;4)-beta-D-glucosyl](n+1) + UDP + H(+). It functions in the pathway glycan metabolism; plant cellulose biosynthesis. Catalytic subunit of cellulose synthase terminal complexes ('rosettes'), required for beta-1,4-glucan microfibril crystallization, a major mechanism of the cell wall formation. The chain is Cellulose synthase A catalytic subunit 5 [UDP-forming] from Arabidopsis thaliana (Mouse-ear cress).